The sequence spans 121 residues: Large ribosomal subunit protein uL18 (121 aa).

It belongs to the universal ribosomal protein uL18 family. As to quaternary structure, part of the 50S ribosomal subunit; part of the 5S rRNA/L5/L18/L25 subcomplex. Contacts the 5S and 23S rRNAs.

In terms of biological role, this is one of the proteins that bind and probably mediate the attachment of the 5S RNA into the large ribosomal subunit, where it forms part of the central protuberance. This is Large ribosomal subunit protein uL18 from Albidiferax ferrireducens (strain ATCC BAA-621 / DSM 15236 / T118) (Rhodoferax ferrireducens).